The chain runs to 375 residues: MSETLELASALIARRSVTPMDAGCQQLLAERLRPLGFDCERLDYGEVNNLWARRGQQGPVFCFAGHTDVVPPGPEAQWRHPPFQPVVEQGLLYGRGAADMKGSVAAFVTALERYLAGGHRPRGSLALLITSDEEGPAVDGTRHVVETLSERGERIDWCLVGEPSSTERVGDVVKVGRRGSLNGRLTVRGDQGHVAYPHLARNPVHQALAALDELVTTRWDEGNDHFPPTSFQISNVQAGTGATNVIPGELEVTFNFRFSTEVTADELQQRVEAVLDRHGLDGRIDWSLSGEPFLTAEGELVAATQAAVRDVCGDPPVLSTSGGTSDGRFIAPTGAQVLELGPVNATIHKVNEHVRAADLDTLSRIYEGVLRRLLG.

Residue histidine 66 participates in Zn(2+) binding. Aspartate 68 is an active-site residue. A Zn(2+)-binding site is contributed by aspartate 99. Glutamate 133 serves as the catalytic Proton acceptor. Glutamate 134, glutamate 162, and histidine 348 together coordinate Zn(2+).

The protein belongs to the peptidase M20A family. DapE subfamily. Homodimer. Zn(2+) serves as cofactor. Co(2+) is required as a cofactor.

It catalyses the reaction N-succinyl-(2S,6S)-2,6-diaminopimelate + H2O = (2S,6S)-2,6-diaminopimelate + succinate. Its pathway is amino-acid biosynthesis; L-lysine biosynthesis via DAP pathway; LL-2,6-diaminopimelate from (S)-tetrahydrodipicolinate (succinylase route): step 3/3. Catalyzes the hydrolysis of N-succinyl-L,L-diaminopimelic acid (SDAP), forming succinate and LL-2,6-diaminopimelate (DAP), an intermediate involved in the bacterial biosynthesis of lysine and meso-diaminopimelic acid, an essential component of bacterial cell walls. In Alkalilimnicola ehrlichii (strain ATCC BAA-1101 / DSM 17681 / MLHE-1), this protein is Succinyl-diaminopimelate desuccinylase.